Here is a 253-residue protein sequence, read N- to C-terminus: Phosphate import ATP-binding protein PstB 1 (253 aa).

The ABC transporter domain occupies 7–248 (LQIRDLSVYY…PKRKETEDYI (242 aa)). Position 39–46 (39–46 (GPSGSGKS)) interacts with ATP.

Belongs to the ABC transporter superfamily. Phosphate importer (TC 3.A.1.7) family. The complex is composed of two ATP-binding proteins (PstB), two transmembrane proteins (PstC and PstA) and a solute-binding protein (PstS).

The protein localises to the cell membrane. The enzyme catalyses phosphate(out) + ATP + H2O = ADP + 2 phosphate(in) + H(+). Functionally, part of the ABC transporter complex PstSACB involved in phosphate import. Responsible for energy coupling to the transport system. The protein is Phosphate import ATP-binding protein PstB 1 of Streptococcus pyogenes serotype M2 (strain MGAS10270).